A 119-amino-acid polypeptide reads, in one-letter code: Ribonuclease P protein component (119 aa).

This sequence belongs to the RnpA family. Consists of a catalytic RNA component (M1 or rnpB) and a protein subunit.

It catalyses the reaction Endonucleolytic cleavage of RNA, removing 5'-extranucleotides from tRNA precursor.. RNaseP catalyzes the removal of the 5'-leader sequence from pre-tRNA to produce the mature 5'-terminus. It can also cleave other RNA substrates such as 4.5S RNA. The protein component plays an auxiliary but essential role in vivo by binding to the 5'-leader sequence and broadening the substrate specificity of the ribozyme. The sequence is that of Ribonuclease P protein component from Klebsiella pneumoniae (strain 342).